The primary structure comprises 831 residues: Isethionate sulfite-lyase (831 aa).

One can recognise a PFL domain in the interval 32–701 (PRVFRLLERF…VVSATPNGRT (670 aa)). 2-hydroxyethane-1-sulfonate contacts are provided by residues R189, Q193, 468-470 (CTE), and R679. C468 serves as the catalytic Cysteine radical intermediate. The active-site Proton acceptor is the E470. The Glycine radical domain occupies 708–831 (DGSSASHGAD…LIARTEHDVM (124 aa)). Residue G806 is modified to Glycine radical.

This sequence belongs to the glycyl radical enzyme (GRE) family. Homodimer. Post-translationally, requires the activating protein IslB to generate the key active site glycyl radical on Gly-806 that is involved in catalysis.

The catalysed reaction is 2-hydroxyethane-1-sulfonate = acetaldehyde + sulfite + H(+). Its pathway is organosulfur degradation; alkanesulfonate degradation. Its function is as follows. Involved in an anaerobic respiration pathway that converts the sulfonate isethionate (2-hydroxyethanesulfonate) to ammonia, acetate and sulfide. Catalyzes the radical-mediated C-S bond cleavage of isethionate (2-hydroxyethanesulfonate) to form sulfite and acetaldehyde. The polypeptide is Isethionate sulfite-lyase (Desulfovibrio desulfuricans (strain ATCC 27774 / DSM 6949 / MB)).